Here is a 63-residue protein sequence, read N- to C-terminus: Hyphancin-3E (63 aa).

Positions 1–22 (MNFSRILFFVFTCFVALASVSG) are cleaved as a signal peptide. Residues 23–26 (APEP) constitute a propeptide, removed by a dipeptidylpeptidase. Leu61 carries the post-translational modification Leucine amide.

The protein belongs to the cecropin family.

Its subcellular location is the secreted. Its function is as follows. Has antibacterial activity. The protein is Hyphancin-3E of Hyphantria cunea (Fall webworm moth).